The sequence spans 430 residues: Enolase (430 aa).

Residue Gln163 participates in (2R)-2-phosphoglycerate binding. Glu205 serves as the catalytic Proton donor. 3 residues coordinate Mg(2+): Asp242, Glu288, and Asp315. (2R)-2-phosphoglycerate contacts are provided by Lys340, Arg369, Ser370, and Lys391. Lys340 functions as the Proton acceptor in the catalytic mechanism.

It belongs to the enolase family. Mg(2+) serves as cofactor.

It localises to the cytoplasm. The protein resides in the secreted. It is found in the cell surface. The enzyme catalyses (2R)-2-phosphoglycerate = phosphoenolpyruvate + H2O. The protein operates within carbohydrate degradation; glycolysis; pyruvate from D-glyceraldehyde 3-phosphate: step 4/5. Catalyzes the reversible conversion of 2-phosphoglycerate (2-PG) into phosphoenolpyruvate (PEP). It is essential for the degradation of carbohydrates via glycolysis. The chain is Enolase from Phytoplasma australiense.